A 633-amino-acid polypeptide reads, in one-letter code: Phospholipid--sterol O-acyltransferase (633 aa).

At 1–6 (MGANSK) the chain is on the cytoplasmic side. A helical; Signal-anchor for type II membrane protein transmembrane segment spans residues 7–29 (SVTASFTVIAVFFLICGGRTAVE). Topologically, residues 30–633 (DETEFHGDYS…TSANMLLQYI (604 aa)) are lumenal. Ser195 serves as the catalytic Acyl-ester intermediate. Residues Asp461 and His505 each act as charge relay system in the active site.

It belongs to the AB hydrolase superfamily. Lipase family.

It is found in the microsome membrane. Involved in lipid catabolism. Essential for sterol esters biosynthesis in leaves and seeds, but not in flowers. Plays a role in controlling the free sterol content of leaves. Catalyzes the transacylation of acyl groups from phospholipids to a variety of different sterols. Prefers phosphatidylethanolamine over phosphatidylcholine as an acyl donor. Not active toward neutral lipids. Highly specific for position sn-2, which in plant lipids is essentially devoid of saturated acyl groups. Broad sterol specificity (cholesterol &gt; campesterol &gt; sitosterol &gt; stigmasterol), but no activity with lupeol or beta-amyrin. This chain is Phospholipid--sterol O-acyltransferase (PSAT), found in Arabidopsis thaliana (Mouse-ear cress).